An 892-amino-acid chain; its full sequence is DNA mismatch repair protein MutS (892 aa).

607 to 614 (GPNMSGKS) provides a ligand contact to ATP. Residues 833–854 (EESQLSFFGGEQSPKKQDKPVL) are disordered. Residues 845-854 (SPKKQDKPVL) are compositionally biased toward basic and acidic residues.

The protein belongs to the DNA mismatch repair MutS family.

Its function is as follows. This protein is involved in the repair of mismatches in DNA. It is possible that it carries out the mismatch recognition step. This protein has a weak ATPase activity. The polypeptide is DNA mismatch repair protein MutS (Bacillus cereus (strain Q1)).